A 250-amino-acid chain; its full sequence is Ribonuclease HII (250 aa).

In terms of domain architecture, RNase H type-2 spans 66–250; that stretch reads QLVAGVDEVG…SFAPVSEYEK (185 aa). The a divalent metal cation site is built by D72, E73, and D164.

It belongs to the RNase HII family. Requires Mn(2+) as cofactor. The cofactor is Mg(2+).

The protein resides in the cytoplasm. The catalysed reaction is Endonucleolytic cleavage to 5'-phosphomonoester.. In terms of biological role, endonuclease that specifically degrades the RNA of RNA-DNA hybrids. The chain is Ribonuclease HII from Lactobacillus johnsonii (strain CNCM I-12250 / La1 / NCC 533).